Consider the following 274-residue polypeptide: Insulin-like growth factor-binding protein-like 1 (274 aa).

The first 21 residues, 1-21, serve as a signal peptide directing secretion; it reads MPRSPGLFLLLLVLQPLPALG. The 76-residue stretch at 30–105 folds into the IGFBP N-terminal domain; sequence RNPECGPCRP…PEGTGLCVCA (76 aa). Disulfide bonds link cysteine 34–cysteine 59, cysteine 37–cysteine 61, cysteine 42–cysteine 62, cysteine 48–cysteine 65, cysteine 73–cysteine 87, cysteine 81–cysteine 102, and cysteine 111–cysteine 147. The 59-residue stretch at 91 to 149 folds into the Kazal-like domain; the sequence is AAGAAPEGTGLCVCAQRGSVCGSDGRSYPSVCALRLRARQAPRALPGHLHKARDGPCEF. In terms of domain architecture, Ig-like C2-type spans 151–255; that stretch reads PVVITPPQSV…GEAQSHGTVT (105 aa). A glycan (N-linked (GlcNAc...) asparagine) is linked at asparagine 162. A disulfide bond links cysteine 172 and cysteine 239.

It is found in the secreted. Functionally, IGF-binding proteins prolong the half-life of IGFs and have been shown to either inhibit or stimulate the growth promoting effects of the IGFs in cell culture. They alter the interaction of IGFs with their cell surface receptors. This chain is Insulin-like growth factor-binding protein-like 1 (IGFBPL1), found in Bos taurus (Bovine).